The chain runs to 132 residues: MTVRPSALDPAIASRLRRNDAGLFPAIAQQHDTGEVLMLGWMDDEALHRTLTTGRATYWSRSRGEYWVKGDTSGHQQWVRSVALDCDGDAVLVRVDQIGPACHTGTRNCFVADPLPTRVGDPGVTADAGPAR.

Residue Asp85 coordinates Mg(2+). Residue Cys86 participates in Zn(2+) binding. Mg(2+)-binding residues include Asp87 and Asp89. 2 residues coordinate Zn(2+): Cys102 and Cys109.

It belongs to the PRA-CH family. As to quaternary structure, homodimer. It depends on Mg(2+) as a cofactor. Zn(2+) is required as a cofactor.

It is found in the cytoplasm. The catalysed reaction is 1-(5-phospho-beta-D-ribosyl)-5'-AMP + H2O = 1-(5-phospho-beta-D-ribosyl)-5-[(5-phospho-beta-D-ribosylamino)methylideneamino]imidazole-4-carboxamide. The protein operates within amino-acid biosynthesis; L-histidine biosynthesis; L-histidine from 5-phospho-alpha-D-ribose 1-diphosphate: step 3/9. Catalyzes the hydrolysis of the adenine ring of phosphoribosyl-AMP. The polypeptide is Phosphoribosyl-AMP cyclohydrolase (Frankia alni (strain DSM 45986 / CECT 9034 / ACN14a)).